Here is a 64-residue protein sequence, read N- to C-terminus: Large ribosomal subunit protein bL33 (64 aa).

This sequence belongs to the bacterial ribosomal protein bL33 family.

This chain is Large ribosomal subunit protein bL33, found in Rippkaea orientalis (strain PCC 8801 / RF-1) (Cyanothece sp. (strain PCC 8801)).